Here is a 559-residue protein sequence, read N- to C-terminus: Formate--tetrahydrofolate ligase (559 aa).

An ATP-binding site is contributed by 68–75 (TPAGEGKT).

This sequence belongs to the formate--tetrahydrofolate ligase family.

The catalysed reaction is (6S)-5,6,7,8-tetrahydrofolate + formate + ATP = (6R)-10-formyltetrahydrofolate + ADP + phosphate. It participates in one-carbon metabolism; tetrahydrofolate interconversion. The sequence is that of Formate--tetrahydrofolate ligase from Rhizobium etli (strain CIAT 652).